A 417-amino-acid chain; its full sequence is Serine hydroxymethyltransferase (417 aa).

Residues Leu-121 and 125-127 (GHL) contribute to the (6S)-5,6,7,8-tetrahydrofolate site. Residue Lys-229 is modified to N6-(pyridoxal phosphate)lysine. 355-357 (SPF) is a binding site for (6S)-5,6,7,8-tetrahydrofolate.

This sequence belongs to the SHMT family. Homodimer. Pyridoxal 5'-phosphate is required as a cofactor.

The protein localises to the cytoplasm. It catalyses the reaction (6R)-5,10-methylene-5,6,7,8-tetrahydrofolate + glycine + H2O = (6S)-5,6,7,8-tetrahydrofolate + L-serine. It participates in one-carbon metabolism; tetrahydrofolate interconversion. The protein operates within amino-acid biosynthesis; glycine biosynthesis; glycine from L-serine: step 1/1. In terms of biological role, catalyzes the reversible interconversion of serine and glycine with tetrahydrofolate (THF) serving as the one-carbon carrier. This reaction serves as the major source of one-carbon groups required for the biosynthesis of purines, thymidylate, methionine, and other important biomolecules. Also exhibits THF-independent aldolase activity toward beta-hydroxyamino acids, producing glycine and aldehydes, via a retro-aldol mechanism. The sequence is that of Serine hydroxymethyltransferase from Citrobacter koseri (strain ATCC BAA-895 / CDC 4225-83 / SGSC4696).